Here is a 230-residue protein sequence, read N- to C-terminus: Glutathione S-transferase 2 (230 aa).

The region spanning A2–R86 is the GST N-terminal domain. The GST C-terminal domain occupies D93–H230.

Belongs to the GST superfamily.

The enzyme catalyses RX + glutathione = an S-substituted glutathione + a halide anion + H(+). Functionally, involved in the oxidative stress response and detoxification. This is Glutathione S-transferase 2 (gst2) from Schizosaccharomyces pombe (strain 972 / ATCC 24843) (Fission yeast).